The primary structure comprises 166 residues: MQKEIFIAGGCFWGVERYFQKVKGVLDTKACYINGGFEGVKYKEVCEGSSHVEAVRVIYDNSKITEEDLWKLYLRIINPYSLNKQGNDRGVQYRIGLYSYDKDLLKKFSDLNEAFMKSEGKKNYIEIQKVEDVTLAEEYHQNYLLKNVNGYCHINLDDIPEEYQKQ.

Residue Cys-11 is part of the active site.

This sequence belongs to the MsrA Met sulfoxide reductase family.

It carries out the reaction L-methionyl-[protein] + [thioredoxin]-disulfide + H2O = L-methionyl-(S)-S-oxide-[protein] + [thioredoxin]-dithiol. The enzyme catalyses [thioredoxin]-disulfide + L-methionine + H2O = L-methionine (S)-S-oxide + [thioredoxin]-dithiol. Its function is as follows. Has an important function as a repair enzyme for proteins that have been inactivated by oxidation. Catalyzes the reversible oxidation-reduction of methionine sulfoxide in proteins to methionine. The sequence is that of Peptide methionine sulfoxide reductase MsrA from Mycoplasmopsis pulmonis (strain UAB CTIP) (Mycoplasma pulmonis).